A 356-amino-acid polypeptide reads, in one-letter code: Glutamine synthetase nodule isozyme (356 aa).

The 81-residue stretch at 19-99 (IIAEYIWIGG…VMCDAYTPAG (81 aa)) folds into the GS beta-grasp domain. The tract at residues 41–66 (PGPVSDPSKLPKWNYDGSSTGQAPGE) is disordered. The GS catalytic domain maps to 106-356 (KRHNAAKIFS…IADTTILWKP (251 aa)).

This sequence belongs to the glutamine synthetase family. In terms of assembly, homooctamer.

It is found in the cytoplasm. The catalysed reaction is L-glutamate + NH4(+) + ATP = L-glutamine + ADP + phosphate + H(+). In Vigna aconitifolia (Moth bean), this protein is Glutamine synthetase nodule isozyme.